A 353-amino-acid chain; its full sequence is Mitochondrial glutathione transporter SLC25A40 (353 aa).

3 Solcar repeats span residues 14-132 (ITPF…LFAL), 140-224 (RSDL…GKWW), and 234-328 (PTVA…GKAF). Transmembrane regions (helical) follow at residues 20–40 (MMASCSGAIITSLLVTPLDVV), 104–124 (LWSGLPPTLIMAVPATVIYFT), 143–163 (LAPLFAGAIARVGSATVISPL), 200–221 (WGPTLLRDVPFSAMYWFNYEKG), 237–257 (AITFTAGALSGSIASIITLPF), and 299–319 (GLFAGFMPRLIKVAPACAIMI).

This sequence belongs to the mitochondrial carrier (TC 2.A.29) family.

The protein resides in the mitochondrion inner membrane. It carries out the reaction glutathione(in) = glutathione(out). In terms of biological role, probable mitochondrial transporter required for glutathione import into mitochondria. Glutathione, which plays key roles in oxidative metabolism, is produced exclusively in the cytosol and is imported in many organelles. Mitochondrial glutathione is required for the activity and stability of proteins containing iron-sulfur clusters. The sequence is that of Mitochondrial glutathione transporter SLC25A40 from Danio rerio (Zebrafish).